Consider the following 486-residue polypeptide: 23S rRNA (uracil(1939)-C(5))-methyltransferase RlmD (486 aa).

Positions 14–76 constitute a TRAM domain; sequence AAQDGSGLPE…NHWEQANLTA (63 aa). [4Fe-4S] cluster is bound by residues C89, C99, C102, and C181. Residues Q289, F318, N323, E339, N374, and D395 each contribute to the S-adenosyl-L-methionine site. The active-site Nucleophile is C442.

The protein belongs to the class I-like SAM-binding methyltransferase superfamily. RNA M5U methyltransferase family. RlmD subfamily.

The catalysed reaction is uridine(1939) in 23S rRNA + S-adenosyl-L-methionine = 5-methyluridine(1939) in 23S rRNA + S-adenosyl-L-homocysteine + H(+). Catalyzes the formation of 5-methyl-uridine at position 1939 (m5U1939) in 23S rRNA. The protein is 23S rRNA (uracil(1939)-C(5))-methyltransferase RlmD of Verminephrobacter eiseniae (strain EF01-2).